A 179-amino-acid polypeptide reads, in one-letter code: Peptidyl-tRNA hydrolase 2, mitochondrial (179 aa).

The helical transmembrane segment at 10 to 32 (YLTNPGALSLAAGVACGVCLGWG) threads the bilayer. Glycyl lysine isopeptide (Lys-Gly) (interchain with G-Cter in ubiquitin) cross-links involve residues Lys76, Lys81, Lys95, Lys106, Lys115, Lys171, and Lys177.

Belongs to the PTH2 family. In terms of assembly, monomer. In terms of processing, ubiquitinated by PRKN during mitophagy, leading to its degradation and enhancement of mitophagy. Deubiquitinated by USP30.

The protein localises to the mitochondrion outer membrane. The catalysed reaction is an N-acyl-L-alpha-aminoacyl-tRNA + H2O = an N-acyl-L-amino acid + a tRNA + H(+). In terms of biological role, peptidyl-tRNA hydrolase which releases tRNAs from the ribosome during protein synthesis. Promotes caspase-independent apoptosis by regulating the function of two transcriptional regulators, AES and TLE1. In Bos taurus (Bovine), this protein is Peptidyl-tRNA hydrolase 2, mitochondrial (PTRH2).